A 271-amino-acid chain; its full sequence is MSRIQNTFAALAAQGRKGLIPFITAGDPDPAKTVELMHALAEGGADVIELGVPFSDPMADGPVIQRSSERALAKGVTLHSVLDDVKRFRARDQKTPVVLMGYANPIERMGADAFAAAARDAGVDGVLVVDYPPEESHDFAAKMRAAGIDPIFLLAPTSTDDRIAAVGQVASGYVYYVSLKGVTGAANLDVSSIAGKIPAIKSRVPLPVGVGFGIRDAATARAVAEVADAVVIGSRLVQLLEQAVPERAAAELAGFVAELRAAIDGAAKPAA.

Active-site proton acceptor residues include Glu49 and Asp60.

It belongs to the TrpA family. As to quaternary structure, tetramer of two alpha and two beta chains.

It carries out the reaction (1S,2R)-1-C-(indol-3-yl)glycerol 3-phosphate + L-serine = D-glyceraldehyde 3-phosphate + L-tryptophan + H2O. Its pathway is amino-acid biosynthesis; L-tryptophan biosynthesis; L-tryptophan from chorismate: step 5/5. The alpha subunit is responsible for the aldol cleavage of indoleglycerol phosphate to indole and glyceraldehyde 3-phosphate. This chain is Tryptophan synthase alpha chain, found in Burkholderia mallei (strain NCTC 10247).